We begin with the raw amino-acid sequence, 382 residues long: Glutamate 5-kinase (382 aa).

Position 15 (Lys-15) interacts with ATP. Substrate is bound by residues Ser-62, Asp-149, and Asn-161. 181–182 (TD) is an ATP binding site. One can recognise a PUA domain in the interval 288-366 (RGSVSVDAGA…VEIERLLGYS (79 aa)).

It belongs to the glutamate 5-kinase family.

The protein resides in the cytoplasm. It catalyses the reaction L-glutamate + ATP = L-glutamyl 5-phosphate + ADP. The protein operates within amino-acid biosynthesis; L-proline biosynthesis; L-glutamate 5-semialdehyde from L-glutamate: step 1/2. Its function is as follows. Catalyzes the transfer of a phosphate group to glutamate to form L-glutamate 5-phosphate. The polypeptide is Glutamate 5-kinase (Delftia acidovorans (strain DSM 14801 / SPH-1)).